We begin with the raw amino-acid sequence, 176 residues long: MAKAIIDIETTGLNPMEHRIVAIGVKLGDRDIILMDESEYYLLVNFWDTVEKEGIEKIIGFNIDFDWQFLKLRSLYHRLKIKHFRKYQGRVDLRQILNGSGGQYRKGTKLVDYCRFLGIDVPEDDANGSEIPELWEKFEEEGDEEAKRKICEHLKRDLERTWELYKILVDCGLIEE.

This is an uncharacterized protein from Methanocaldococcus jannaschii (strain ATCC 43067 / DSM 2661 / JAL-1 / JCM 10045 / NBRC 100440) (Methanococcus jannaschii).